A 473-amino-acid polypeptide reads, in one-letter code: Laccase-3 (473 aa).

Positions 1–21 (MSFSSLRRALVFLGACSSALA) are cleaved as a signal peptide. 2 consecutive Plastocyanin-like domains span residues 23–148 (IGPV…LVIY) and 160–298 (VDDE…ILRY). Asn-75 carries N-linked (GlcNAc...) asparagine glycosylation. Cu cation is bound by residues His-85, His-87, His-130, and His-132. Cystine bridges form between Cys-106–Cys-462 and Cys-138–Cys-221. Asn-226, Asn-283, Asn-309, Asn-346, Asn-350, and Asn-374 each carry an N-linked (GlcNAc...) asparagine glycan. The Plastocyanin-like 3 domain occupies 365–444 (TVPVLLQILN…AGLAIVFAED (80 aa)). Residues His-410, His-413, His-415, His-426, Cys-427, His-428, and His-432 each coordinate Cu cation. Residue Asn-470 is glycosylated (N-linked (GlcNAc...) asparagine).

It belongs to the multicopper oxidase family. As to quaternary structure, homodimer. The cofactor is Cu cation.

The protein localises to the secreted. It carries out the reaction 4 hydroquinone + O2 = 4 benzosemiquinone + 2 H2O. Its function is as follows. Lignin degradation and detoxification of lignin-derived products. The polypeptide is Laccase-3 (LCC3) (Trametes villosa (White-rot fungus)).